Consider the following 302-residue polypeptide: Elongation factor Ts (302 aa).

An involved in Mg(2+) ion dislocation from EF-Tu region spans residues 80-83 (TDFV).

The protein belongs to the EF-Ts family.

It is found in the cytoplasm. Functionally, associates with the EF-Tu.GDP complex and induces the exchange of GDP to GTP. It remains bound to the aminoacyl-tRNA.EF-Tu.GTP complex up to the GTP hydrolysis stage on the ribosome. The chain is Elongation factor Ts from Methylibium petroleiphilum (strain ATCC BAA-1232 / LMG 22953 / PM1).